The chain runs to 234 residues: 2-C-methyl-D-erythritol 4-phosphate cytidylyltransferase (234 aa).

This sequence belongs to the IspD/TarI cytidylyltransferase family. IspD subfamily.

It catalyses the reaction 2-C-methyl-D-erythritol 4-phosphate + CTP + H(+) = 4-CDP-2-C-methyl-D-erythritol + diphosphate. Its pathway is isoprenoid biosynthesis; isopentenyl diphosphate biosynthesis via DXP pathway; isopentenyl diphosphate from 1-deoxy-D-xylulose 5-phosphate: step 2/6. Functionally, catalyzes the formation of 4-diphosphocytidyl-2-C-methyl-D-erythritol from CTP and 2-C-methyl-D-erythritol 4-phosphate (MEP). In Desulforamulus reducens (strain ATCC BAA-1160 / DSM 100696 / MI-1) (Desulfotomaculum reducens), this protein is 2-C-methyl-D-erythritol 4-phosphate cytidylyltransferase.